The sequence spans 135 residues: Snaclec echicetin subunit alpha (135 aa).

The signal sequence occupies residues 1–4 (GADE). Intrachain disulfides connect Cys6/Cys17, Cys34/Cys129, and Cys104/Cys121. A C-type lectin domain is found at 13–130 (NGVYCYMLFK…CENTFPFMCK (118 aa)).

It belongs to the snaclec family. In terms of assembly, heterodimer of subunits alpha and beta; disulfide-linked. Expressed by the venom gland.

The protein resides in the secreted. Its function is as follows. Binding of echicetin to GPIbalpha (GP1BA) receptor on platelets alone results in inhibition of platelet aggregation, while binding to both GP1BA receptor and IgMk promotes platelet aggregation and signal transduction. The sequence is that of Snaclec echicetin subunit alpha from Echis carinatus (Saw-scaled viper).